The primary structure comprises 748 residues: Malate synthase G (748 aa).

Acetyl-CoA is bound by residues Val141, Arg148–Phe149, Ser298, and Arg335. Arg362 functions as the Proton acceptor in the catalytic mechanism. Glyoxylate-binding positions include Arg362, Glu453, and Gly478–Asp481. Residues Glu453 and Asp481 each contribute to the Mg(2+) site. Residue Pro562 participates in acetyl-CoA binding. At Cys639 the chain carries Cysteine sulfenic acid (-SOH). The active-site Proton donor is the Asp653.

Belongs to the malate synthase family. GlcB subfamily. Monomer. Mg(2+) is required as a cofactor.

The protein localises to the cytoplasm. It catalyses the reaction glyoxylate + acetyl-CoA + H2O = (S)-malate + CoA + H(+). The protein operates within carbohydrate metabolism; glyoxylate cycle; (S)-malate from isocitrate: step 2/2. Involved in the glycolate utilization. Catalyzes the condensation and subsequent hydrolysis of acetyl-coenzyme A (acetyl-CoA) and glyoxylate to form malate and CoA. In Corynebacterium efficiens (strain DSM 44549 / YS-314 / AJ 12310 / JCM 11189 / NBRC 100395), this protein is Malate synthase G.